The sequence spans 202 residues: LexA repressor (202 aa).

The segment at residues 28–48 is a DNA-binding region (H-T-H motif); sequence RAEIAQRLGFRSPNAAEEHLK. Residues serine 119 and lysine 156 each act as for autocatalytic cleavage activity in the active site.

This sequence belongs to the peptidase S24 family. In terms of assembly, homodimer.

The enzyme catalyses Hydrolysis of Ala-|-Gly bond in repressor LexA.. In terms of biological role, represses a number of genes involved in the response to DNA damage (SOS response), including recA and lexA. Binds to the 16 bp palindromic sequence 5'-CTGTATATATATACAG-3'. In the presence of single-stranded DNA, RecA interacts with LexA causing an autocatalytic cleavage which disrupts the DNA-binding part of LexA, leading to derepression of the SOS regulon and eventually DNA repair. The chain is LexA repressor from Cronobacter sakazakii (strain ATCC BAA-894) (Enterobacter sakazakii).